Reading from the N-terminus, the 874-residue chain is Alanine--tRNA ligase (874 aa).

4 residues coordinate Zn(2+): His-563, His-567, Cys-665, and His-669.

The protein belongs to the class-II aminoacyl-tRNA synthetase family. Requires Zn(2+) as cofactor.

The protein localises to the cytoplasm. The enzyme catalyses tRNA(Ala) + L-alanine + ATP = L-alanyl-tRNA(Ala) + AMP + diphosphate. In terms of biological role, catalyzes the attachment of alanine to tRNA(Ala) in a two-step reaction: alanine is first activated by ATP to form Ala-AMP and then transferred to the acceptor end of tRNA(Ala). Also edits incorrectly charged Ser-tRNA(Ala) and Gly-tRNA(Ala) via its editing domain. The chain is Alanine--tRNA ligase from Actinobacillus pleuropneumoniae serotype 3 (strain JL03).